Here is a 267-residue protein sequence, read N- to C-terminus: Type II pantothenate kinase (267 aa).

6–13 (DAGGTLIK) provides a ligand contact to ATP. Catalysis depends on Glu70, which acts as the Proton acceptor. Residues Thr99, 121-125 (GGMIQ), Tyr137, and Ser225 contribute to the ATP site.

It belongs to the type II pantothenate kinase family. In terms of assembly, homodimer.

The protein resides in the cytoplasm. It catalyses the reaction (R)-pantothenate + ATP = (R)-4'-phosphopantothenate + ADP + H(+). It functions in the pathway cofactor biosynthesis; coenzyme A biosynthesis; CoA from (R)-pantothenate: step 1/5. Functionally, catalyzes the phosphorylation of pantothenate (Pan), the first step in CoA biosynthesis. This Staphylococcus aureus (strain bovine RF122 / ET3-1) protein is Type II pantothenate kinase.